A 417-amino-acid chain; its full sequence is MYYLKNTNFWMFGLFFFFYFFIMGAYFPFFPIWLHDINHISKSDTGIIFAAISLFSLLFQPLFGLLSDKLGLRKYLLWIITGMLVMFAPFFIFIFGPLLQYNILVGSIVGGIYLGFCFNAGAPAVEAFIEKVSRRSNFEFGRARMFGCVGWALCASIVGIMFTINNQFVFWLGSGCALILAVLLFFAKTDAPSSATVANAVGANHSAFSLKLALELFRQPKLWFLSLYVIGVSCTYDVFDQQFANFFTSFFATGEQGTRVFGYVTTMGELLNASIMFFAPLIINRIGGKNALLLAGTIMSVRIIGSSFATSALEVVILKTLHMFEVPFLLVGCFKYITSQFEVRFSATIYLVCFCFFKQLAMIFMSVLAGNMYESIGFQGAYLVLGLVALGFTLISVFTLSGPGPLSLLRRQVNEVA.

M1 is subject to N-formylmethionine; partial. Residues 1 to 7 are Cytoplasmic-facing; it reads MYYLKNT. The chain crosses the membrane as a helical span at residues 8 to 34; it reads NFWMFGLFFFFYFFIMGAYFPFFPIWL. The Periplasmic segment spans residues 35–41; sequence HDINHIS. The helical transmembrane segment at 42-70 threads the bilayer; sequence KSDTGIIFAAISLFSLLFQPLFGLLSDKL. The Cytoplasmic segment spans residues 71 to 74; that stretch reads GLRK. The helical transmembrane segment at 75–100 threads the bilayer; sequence YLLWIITGMLVMFAPFFIFIFGPLLQ. Residues 101-104 are Periplasmic-facing; that stretch reads YNIL. A helical transmembrane segment spans residues 105 to 129; the sequence is VGSIVGGIYLGFCFNAGAPAVEAFI. The Cytoplasmic segment spans residues 130 to 140; it reads EKVSRRSNFEF. The chain crosses the membrane as a helical span at residues 141 to 163; that stretch reads GRARMFGCVGWALCASIVGIMFT. The Periplasmic portion of the chain corresponds to 164 to 166; it reads INN. A helical membrane pass occupies residues 167–186; the sequence is QFVFWLGSGCALILAVLLFF. The Cytoplasmic segment spans residues 187-220; the sequence is AKTDAPSSATVANAVGANHSAFSLKLALELFRQP. The helical transmembrane segment at 221–249 threads the bilayer; it reads KLWFLSLYVIGVSCTYDVFDQQFANFFTS. The Periplasmic segment spans residues 250–253; the sequence is FFAT. Residues 254–278 traverse the membrane as a helical segment; the sequence is GEQGTRVFGYVTTMGELLNASIMFF. Topologically, residues 279–288 are cytoplasmic; sequence APLIINRIGG. A helical transmembrane segment spans residues 289–308; sequence KNALLLAGTIMSVRIIGSSF. The Periplasmic portion of the chain corresponds to 309 to 311; that stretch reads ATS. Residues 312–334 form a helical membrane-spanning segment; it reads ALEVVILKTLHMFEVPFLLVGCF. Over 335–346 the chain is Cytoplasmic; the sequence is KYITSQFEVRFS. A helical transmembrane segment spans residues 347 to 374; that stretch reads ATIYLVCFCFFKQLAMIFMSVLAGNMYE. The Periplasmic segment spans residues 375 to 377; sequence SIG. The helical transmembrane segment at 378-398 threads the bilayer; it reads FQGAYLVLGLVALGFTLISVF. Residues 399 to 417 are Cytoplasmic-facing; it reads TLSGPGPLSLLRRQVNEVA.

Monomer.

The protein localises to the cell inner membrane. It carries out the reaction lactose(in) + H(+)(in) = lactose(out) + H(+)(out). It catalyses the reaction melibiose(in) + H(+)(in) = melibiose(out) + H(+)(out). Inhibited by the proton ionophore carbonyl cyanide m-chlorophenylhydrazone (CCCP). Responsible for transport of beta-galactosides into the cell, with the concomitant import of a proton (symport system). Can transport lactose, melibiose, the synthetic disaccharide lactulose or the analog methyl-1-thio-beta,D-galactopyranoside (TMG), but not sucrose or fructose. The substrate specificity is directed toward the galactopyranosyl moiety of the substrate. This is Lactose permease from Escherichia coli (strain K12).